The chain runs to 159 residues: Ribosomal RNA large subunit methyltransferase H (159 aa).

S-adenosyl-L-methionine contacts are provided by residues G108 and 127–132 (FSKMTF).

This sequence belongs to the RNA methyltransferase RlmH family. As to quaternary structure, homodimer.

It localises to the cytoplasm. It carries out the reaction pseudouridine(1915) in 23S rRNA + S-adenosyl-L-methionine = N(3)-methylpseudouridine(1915) in 23S rRNA + S-adenosyl-L-homocysteine + H(+). In terms of biological role, specifically methylates the pseudouridine at position 1915 (m3Psi1915) in 23S rRNA. In Clostridium perfringens (strain ATCC 13124 / DSM 756 / JCM 1290 / NCIMB 6125 / NCTC 8237 / Type A), this protein is Ribosomal RNA large subunit methyltransferase H.